The following is a 459-amino-acid chain: E3 ubiquitin-protein ligase RNF25 (459 aa).

An RWD domain is found at 18 to 128 (SEVEVLESIY…EKGKEILTDN (111 aa)). Residues C135, C138, C153, H155, H158, C161, C198, and C201 each coordinate Zn(2+). The RING-type zinc-finger motif lies at 135 to 202 (CVICLYGFQE…AVGVQCPVCR (68 aa)). Disordered regions lie at residues 268–309 (PPAP…PPLP) and 322–459 (TRSN…KDGS). A compositionally biased stretch (polar residues) spans 282 to 303 (KGSQPPSTLAAELSTSPAVQST). Composition is skewed to basic and acidic residues over residues 349 to 370 (QPERRHPKGGECHAPKGTRDTQ), 378 to 389 (PLKEPMDLKPEP), 413 to 424 (RTRDCVRWERSK), and 446 to 459 (TRRESLGLESKDGS). At S450 the chain carries Phosphoserine.

It belongs to the RNF25 family. Interacts with UBE2D2, and may also interact with UBE2E1 and UBE2E3. Interacts with RELA/p65. Post-translationally, ubiquitinated; autoubiquitinated.

The protein resides in the cytoplasm. It catalyses the reaction S-ubiquitinyl-[E2 ubiquitin-conjugating enzyme]-L-cysteine + [acceptor protein]-L-lysine = [E2 ubiquitin-conjugating enzyme]-L-cysteine + N(6)-ubiquitinyl-[acceptor protein]-L-lysine.. It participates in protein modification; protein ubiquitination. In terms of biological role, E3 ubiquitin-protein ligase that plays a key role in the RNF14-RNF25 translation quality control pathway, a pathway that takes place when a ribosome has stalled during translation, and which promotes ubiquitination and degradation of translation factors on stalled ribosomes. Catalyzes ubiquitination of RPS27A in response to ribosome collisions, promoting activation of RNF14. RNF25 catalyzes ubiquitination of other ribosomal proteins on stalled ribosomes, such as RPL0, RPL1, RPL12, RPS13 and RPS17. Also involved in ubiquitination and degradation of stalled ETF1/eRF1. Independently of its function in the response to stalled ribosomes, mediates ubiquitination and subsequent proteasomal degradation of NKD2. May also stimulate transcription mediated by NF-kappa-B via its interaction with RELA/p65. This chain is E3 ubiquitin-protein ligase RNF25, found in Homo sapiens (Human).